A 371-amino-acid polypeptide reads, in one-letter code: Enterobactin C-glucosyltransferase (371 aa).

The protein belongs to the glycosyltransferase 28 family.

The protein resides in the cytoplasm. It carries out the reaction enterobactin + UDP-alpha-D-glucose = monoglucosyl-enterobactin + UDP. It catalyses the reaction monoglucosyl-enterobactin + UDP-alpha-D-glucose = diglucosyl-enterobactin + UDP + H(+). The enzyme catalyses diglucosyl-enterobactin + UDP-alpha-D-glucose = triglucosyl-enterobactin + UDP + H(+). It functions in the pathway siderophore biosynthesis; enterobactin biosynthesis. Functionally, catalyzes the successive monoglucosylation, diglucosylation and triglucosylation of enterobactin (Ent). Transfers glucosyl groups from uridine-5'-diphosphoglucose (UDP-Glc) to C5 of one, two or three of the 2,3-dihydroxybenzoyl (DHB) units of Ent to yield monoglucosyl-C-Ent (MGE), diglucosyl-C-Ent (DGE) and triglucosyl-C-Ent (TGE). Glucosylation decreases the membrane affinity of Ent and increases the iron acquisition rate. The chain is Enterobactin C-glucosyltransferase from Escherichia coli O6:H1 (strain CFT073 / ATCC 700928 / UPEC).